A 648-amino-acid polypeptide reads, in one-letter code: MTKSKPATKKNEWTVKDSCSLYGLDLWGEEYFSINDSGNVTVSPQGKEGNSLELTHLLEELKGRNLNTPLLLRFDDILEDRLKKLHQAFENAINQYGYNNDYQGVFPIKCNQQRHVVEEIVTIGRKWHFGLEAGSKAELLIALALVNDPKAFLICNGYKDNRYIETTILARQLGRQPIVVIEQSDEVGRIIKASQKLGAAPLIGIRAKLSNQSSGRWGNSVGEKSKFGLSIPEILKAVQELTAAGLLNELILLHFHVGSQINDIAILKNALQEASQIYVELNRLGAPMGHLDVGGGLGVDYDGSRTATSASTNYSLQNYANDVVATIQECCKAKKVKVPKLISESGRFLSSHFSILIFNVLGTSSVPTQIAIETSNECLSVKNLRETLMILHQICEEKKIDVSKLQEAWNDALKFKEDALNAFRLGFIDLTERATAEQLTWACAKQIAAHLPNDLKIPKELLAINKGLTETYYANISIFRSAPDTWAIQQLFPLLPIHRLQEKPDQLGHFADLTCDSDGKLARFINNGQEKFLLELHTVKANENYWIGMFLGGAYQEVMGNLHNLFGSTNAIHIRLTKNGKYKLDHVVRGNSKSDVLQAMEHDSEQLLERIRMASESAIQQGSLKINDAQRLIEHVETSLRQSTYLQE.

The residue at position 109 (lysine 109) is an N6-(pyridoxal phosphate)lysine. Residue 291–301 (LDVGGGLGVDY) participates in substrate binding.

It belongs to the Orn/Lys/Arg decarboxylase class-II family. SpeA subfamily. Mg(2+) is required as a cofactor. The cofactor is pyridoxal 5'-phosphate.

It catalyses the reaction L-arginine + H(+) = agmatine + CO2. Functionally, catalyzes the biosynthesis of agmatine from arginine. The sequence is that of Biosynthetic arginine decarboxylase from Prochlorococcus marinus (strain SARG / CCMP1375 / SS120).